The sequence spans 844 residues: Bifunctional abietadiene synthase, chloroplastic (844 aa).

Residues 1–46 constitute a chloroplast transit peptide; it reads QSIPHFSTTLNAGSSARKRRSLYLRWGKGSNKIIACVGEGATSVPY. Lys245 lines the substrate pocket. Residues Asp378 and Asp380 each contribute to the Mg(2+) site. The short motif at 378–381 is the DXDD motif element; that stretch reads DIDD. Lys465 provides a ligand contact to substrate. 5 residues coordinate Mg(2+): Asp597, Asp601, Asn741, Thr745, and Glu749. Positions 597-601 match the DDXXD motif motif; sequence DDLYD.

The protein belongs to the terpene synthase family. Tpsd subfamily. In terms of assembly, monomer. The cofactor is Mg(2+).

Its subcellular location is the plastid. The protein localises to the chloroplast. The enzyme catalyses (2E,6E,10E)-geranylgeranyl diphosphate = (+)-copalyl diphosphate. The catalysed reaction is (+)-copalyl diphosphate = abieta-7,13-diene + diphosphate. It carries out the reaction (+)-copalyl diphosphate = neoabietadiene + diphosphate. It catalyses the reaction (+)-copalyl diphosphate = abieta-8(14),12-diene + diphosphate. It functions in the pathway terpene metabolism; oleoresin biosynthesis. Its function is as follows. Involved in defensive oleoresin formation in conifers in response to insect attack or other injury. Involved in diterpene (C20) olefins biosynthesis. Bifunctional enzyme that catalyzes two sequential cyclizations of geranylgeranyl diphosphate (GGPP) to abietadiene. The copalyl diphosphate (CPP) intermediate diffuses freely between the 2 active sites in the enzyme. The polypeptide is Bifunctional abietadiene synthase, chloroplastic (LAS) (Abies balsamea (Balsam fir)).